Here is a 250-residue protein sequence, read N- to C-terminus: NAD-dependent protein deacetylase 2 (250 aa).

The region spanning 4–250 (MDSKNLFKKA…LRNIWNLIKS (247 aa)) is the Deacetylase sirtuin-type domain. A29, T33, F40, R41, Q107, I109, D110, and H125 together coordinate NAD(+). F40 contributes to the nicotinamide binding site. Nicotinamide-binding residues include I109 and D110. H125 acts as the Proton acceptor in catalysis. 4 residues coordinate Zn(2+): C133, C136, C158, and C161. Residues S198, S199, and N219 each contribute to the NAD(+) site.

Belongs to the sirtuin family. Class U subfamily. The cofactor is Zn(2+).

It localises to the cytoplasm. It catalyses the reaction N(6)-acetyl-L-lysyl-[protein] + NAD(+) + H2O = 2''-O-acetyl-ADP-D-ribose + nicotinamide + L-lysyl-[protein]. In terms of biological role, NAD-dependent protein deacetylase which modulates the activities of several enzymes which are inactive in their acetylated form. This is NAD-dependent protein deacetylase 2 from Caldanaerobacter subterraneus subsp. tengcongensis (strain DSM 15242 / JCM 11007 / NBRC 100824 / MB4) (Thermoanaerobacter tengcongensis).